The following is a 499-amino-acid chain: Guanosine-5'-triphosphate,3'-diphosphate pyrophosphatase (499 aa).

This sequence belongs to the GppA/Ppx family. GppA subfamily.

It carries out the reaction guanosine 3'-diphosphate 5'-triphosphate + H2O = guanosine 3',5'-bis(diphosphate) + phosphate + H(+). It functions in the pathway purine metabolism; ppGpp biosynthesis; ppGpp from GTP: step 2/2. In terms of biological role, catalyzes the conversion of pppGpp to ppGpp. Guanosine pentaphosphate (pppGpp) is a cytoplasmic signaling molecule which together with ppGpp controls the 'stringent response', an adaptive process that allows bacteria to respond to amino acid starvation, resulting in the coordinated regulation of numerous cellular activities. The chain is Guanosine-5'-triphosphate,3'-diphosphate pyrophosphatase from Sodalis glossinidius (strain morsitans).